The chain runs to 280 residues: Putative pyruvate, phosphate dikinase regulatory protein (280 aa).

ADP is bound at residue 154–161 (GVSRTSKT).

It belongs to the pyruvate, phosphate/water dikinase regulatory protein family. PDRP subfamily.

The catalysed reaction is N(tele)-phospho-L-histidyl/L-threonyl-[pyruvate, phosphate dikinase] + ADP = N(tele)-phospho-L-histidyl/O-phospho-L-threonyl-[pyruvate, phosphate dikinase] + AMP + H(+). It carries out the reaction N(tele)-phospho-L-histidyl/O-phospho-L-threonyl-[pyruvate, phosphate dikinase] + phosphate + H(+) = N(tele)-phospho-L-histidyl/L-threonyl-[pyruvate, phosphate dikinase] + diphosphate. Bifunctional serine/threonine kinase and phosphorylase involved in the regulation of the pyruvate, phosphate dikinase (PPDK) by catalyzing its phosphorylation/dephosphorylation. In Nitrobacter hamburgensis (strain DSM 10229 / NCIMB 13809 / X14), this protein is Putative pyruvate, phosphate dikinase regulatory protein.